Here is a 173-residue protein sequence, read N- to C-terminus: Alpha-crystallin A chain (173 aa).

M1 carries the post-translational modification N-acetylmethionine. The required for complex formation with BFSP1 and BFSP2 stretch occupies residues 1 to 63 (MDITIQHPWF…RTVLESGISE (63 aa)). A Deamidated glutamine; partial modification is found at Q6. Phosphoserine is present on S45. Residue Q50 is modified to Deamidated glutamine; partial. Positions 52–164 (LFRTVLESGI…SDRSIPVSRE (113 aa)) constitute a sHSP domain. At K99 the chain carries N6-acetyllysine. Zn(2+) contacts are provided by H100, E102, and H107. S122 bears the Phosphoserine mark. The residue at position 123 (N123) is a Deamidated asparagine; partial. Residues 144-173 (PKIHSNMESSHSDRSIPVSREEKPTLAPSS) are disordered. Basic and acidic residues predominate over residues 153-167 (SHSDRSIPVSREEKP). H154 is a binding site for Zn(2+). The O-linked (GlcNAc) serine glycan is linked to S162.

The protein belongs to the small heat shock protein (HSP20) family. In terms of assembly, heteromer composed of three CRYAA and one CRYAB subunits. Inter-subunit bridging via zinc ions enhances stability, which is crucial as there is no protein turn over in the lens. Can also form homodimers and homotetramers (dimers of dimers) which serve as the building blocks of homooligomers. Within homooligomers, the zinc-binding motif is created from residues of 3 different molecules. His-100 and Glu-102 from one molecule are ligands of the zinc ion, and His-107 and His-154 residues from additional molecules complete the site with tetrahedral coordination geometry. Part of a complex required for lens intermediate filament formation composed of BFSP1, BFSP2 and CRYAA. Acetylation at Lys-99 may increase chaperone activity. Post-translationally, undergoes age-dependent proteolytical cleavage at the C-terminus.

It localises to the cytoplasm. The protein localises to the nucleus. Contributes to the transparency and refractive index of the lens. Acts as a chaperone, preventing aggregation of various proteins under a wide range of stress conditions. Required for the correct formation of lens intermediate filaments as part of a complex composed of BFSP1, BFSP2 and CRYAA. This Didelphis virginiana (North American opossum) protein is Alpha-crystallin A chain (CRYAA).